The primary structure comprises 528 residues: Putative ABC transporter ATP-binding protein MA_1418 (528 aa).

ABC transporter domains lie at 2–242 (IELR…TNLT) and 262–494 (ISVK…SDYK). Residues 36–43 (GHSAAGKT) and 294–301 (GENGSGKT) each bind ATP.

This sequence belongs to the ABC transporter superfamily.

Its subcellular location is the cell membrane. In terms of biological role, probably part of an ABC transporter complex. Responsible for energy coupling to the transport system. The polypeptide is Putative ABC transporter ATP-binding protein MA_1418 (Methanosarcina acetivorans (strain ATCC 35395 / DSM 2834 / JCM 12185 / C2A)).